We begin with the raw amino-acid sequence, 376 residues long: Chaperone protein DnaJ (376 aa).

The J domain occupies 5–69; that stretch reads DYYEVLGISK…QKRAQYDQYG (65 aa). A CR-type zinc finger spans residues 133 to 215; that stretch reads GKDAEIEIPR…CHGKGRVTKT (83 aa). C146, C149, C163, C166, C189, C192, C203, and C206 together coordinate Zn(2+). CXXCXGXG motif repeat units follow at residues 146–153, 163–170, 189–196, and 203–210; these read CDTCHGSG, CSHCGGKG, CQYCNGTG, and CSTCHGKG.

It belongs to the DnaJ family. In terms of assembly, homodimer. Zn(2+) is required as a cofactor.

Its subcellular location is the cytoplasm. Functionally, participates actively in the response to hyperosmotic and heat shock by preventing the aggregation of stress-denatured proteins and by disaggregating proteins, also in an autonomous, DnaK-independent fashion. Unfolded proteins bind initially to DnaJ; upon interaction with the DnaJ-bound protein, DnaK hydrolyzes its bound ATP, resulting in the formation of a stable complex. GrpE releases ADP from DnaK; ATP binding to DnaK triggers the release of the substrate protein, thus completing the reaction cycle. Several rounds of ATP-dependent interactions between DnaJ, DnaK and GrpE are required for fully efficient folding. Also involved, together with DnaK and GrpE, in the DNA replication of plasmids through activation of initiation proteins. The protein is Chaperone protein DnaJ of Listeria welshimeri serovar 6b (strain ATCC 35897 / DSM 20650 / CCUG 15529 / CIP 8149 / NCTC 11857 / SLCC 5334 / V8).